A 1399-amino-acid chain; its full sequence is MKDLLNLLKNQGQVEEFDAIRIGLASPEMIRSWSFGEVKKPETINYRTFKPERDGLFCAKIFGPVKDYECLCGKYKRLKHRGVICEKCGVEVALAKVRRERMAHIELASPVAHIWFLKSLPSRIGLLMDMTLRDIERVLYFESYVVIDPGMTTLEKGQLLNDEQYFEALEEFGDDFDARMGAEAVRELLHAIDLEHEIGRLREEIPQTNSETKIKKLSKRLKLMEAFQGSGNLPEWMVLTVLPVLPPDLRPLVPLDGGRFATSDLNDLYRRVINRNNRLKRLLDLSAPDIIVRNEKRMLQEAVDALLDNGRRGRAITGSNKRPLKSLADMIKGKQGRFRQNLLGKRVDYSGRSVITVGPTLRLHQCGLPKKMALELFKPFIFGKLEMRGLATTIKAAKKMVERELPEVWDVLAEVIREHPVLLNRAPTLHRLGIQAFEPVLIEGKAIQLHPLVCAAYNADFDGDQMAVHVPLTLEAQLEARALMMSTNNILSPANGEPIIVPSQDVVLGLYYMTREAINAKGEGRVFADLQEVDRVFRAGEAALHAKIKVRINETVKERDGSVVKNTRIVDTTVGRALLFQVVPAGLPYDVVNQPMKKKAISKLINQCYRVVGLKETVIFADQLMYTGFAYSTISGVSIGVNDFVIPDEKARIIGNATDEVKEIESQYASGLVTQGEKYNKVIDLWSKANDEVSKAMMANLSKEKVIDREGKEVEQESFNSMYMMADSGARGSAAQIRQLAGMRGLMAKPDGSIIETPITANFREGLSVLQYFISTHGARKGLADTALKTANSGYLTRRLVDVAQDLVVTEIDCGTDQGLVMTPHIEGGDVVEPLGERVLGRVIARDVFKPGTEDVIVPAGTLVDEQWVEFIELNSIDEVIVRSPINCETRYGICAKCYGRDLARGHQVNIGEAVGVIAAQSIGEPGTQLTMRTFHIGGAASRTSAADSVQVKNGGMVRLHNLKQVERADGNLVAVSRSGELAIADEFGRERERYKLPYGAVISVKEGEKVEAGAIVAKWDPHTHPIVTELKGTVTFVGMEENITIKRQTDELTGLTNIEVLDVKDRPAAGKEIRPAIKMVDASGKDLYLPGTDVPAQYFLPANALVGVADGAQIGVGDVIARIPQETSKTRDITGGLPRVADLFEARRPKEASILAEVSGTIAFGKETKGKRRLVITPTDGSDPYEELIPKWRHLNVFEGEQVNRGEVISDGPSDPHDILRLLGVSALAKYIVNEIQDVYRLQGVKINDKHIETILRQMLRKVEISESGDSSFIKGDQMELTQVLVENERLAGEDKFISKFTRVLLGITKASLSTESFISAASFQETTRVLTEAAVTGKRDYLRGLKENVVVGRLIPAGTGLAYHSERKRRRDADKPLRVSASEVEAALTEALNSSGN.

Zn(2+) is bound by residues cysteine 70, cysteine 72, cysteine 85, and cysteine 88. Aspartate 460, aspartate 462, and aspartate 464 together coordinate Mg(2+). Residues cysteine 814, cysteine 888, cysteine 895, and cysteine 898 each contribute to the Zn(2+) site.

It belongs to the RNA polymerase beta' chain family. The RNAP catalytic core consists of 2 alpha, 1 beta, 1 beta' and 1 omega subunit. When a sigma factor is associated with the core the holoenzyme is formed, which can initiate transcription. The cofactor is Mg(2+). Zn(2+) serves as cofactor.

It catalyses the reaction RNA(n) + a ribonucleoside 5'-triphosphate = RNA(n+1) + diphosphate. DNA-dependent RNA polymerase catalyzes the transcription of DNA into RNA using the four ribonucleoside triphosphates as substrates. The polypeptide is DNA-directed RNA polymerase subunit beta' (Pseudomonas putida (strain ATCC 700007 / DSM 6899 / JCM 31910 / BCRC 17059 / LMG 24140 / F1)).